A 671-amino-acid chain; its full sequence is Bifunctional acetylxylan esterase/xylanase XynS20E (671 aa).

The signal sequence occupies residues 1–19 (MRLGVALSTIAVLLTATSA). The segment at 54–279 (QGAGRDIHVY…IQDIWDFVSQ (226 aa)) is acetylxylan esterase. S152 serves as the catalytic Charge relay system. N-linked (GlcNAc...) asparagine glycosylation is present at N238. The segment at 285-328 (PVSASGNGGGNTTPTNPSTGGNGNGNGGGNTTPTNPSTGGNGNG) is disordered. Gly residues predominate over residues 304 to 314 (GGNGNGNGGGN). CBM10 domains follow at residues 335–374 (KCSS…CGCG) and 383–422 (TCSA…CGCG). N339 carries N-linked (GlcNAc...) asparagine glycosylation. N445 and N483 each carry an N-linked (GlcNAc...) asparagine glycan. In terms of domain architecture, GH11 spans 461–661 (TVTSNKVGDI…NNGGTSGTAD (201 aa)). The Nucleophile role is filled by E555. The Proton donor role is filled by E648.

In the N-terminal section; belongs to the axeA family. The protein in the C-terminal section; belongs to the glycosyl hydrolase 11 (cellulase G) family.

It localises to the secreted. It carries out the reaction Deacetylation of xylans and xylo-oligosaccharides.. The catalysed reaction is Endohydrolysis of (1-&gt;4)-beta-D-xylosidic linkages in xylans.. Its pathway is glycan degradation; xylan degradation. Its function is as follows. Bifunctional acetylxylan esterase/xylanase involved in the hydrolysis of xylan, a major structural heterogeneous polysaccharide found in plant biomass representing the second most abundant polysaccharide in the biosphere, after cellulose. Degrades xylan from acetylxylan, beechwood, birchwood, and oat spelt, and releases acetate from 4-methylumbelliferyl acetate and beta-D-xylose tetraacetate. No activity is observed against carboxy methyl cellulose, beta-glucan, p-nitrophenol acetate, p-nitrophenol laurate, p-nitrophenol myristate, p-nitrophenol, palmitate, or beta-naphthol acetate. This chain is Bifunctional acetylxylan esterase/xylanase XynS20E (xynS20E), found in Neocallimastix patriciarum (Rumen fungus).